A 352-amino-acid polypeptide reads, in one-letter code: Histidinol-phosphate aminotransferase (352 aa).

N6-(pyridoxal phosphate)lysine is present on Lys216.

Belongs to the class-II pyridoxal-phosphate-dependent aminotransferase family. Histidinol-phosphate aminotransferase subfamily. Requires pyridoxal 5'-phosphate as cofactor.

It carries out the reaction L-histidinol phosphate + 2-oxoglutarate = 3-(imidazol-4-yl)-2-oxopropyl phosphate + L-glutamate. It functions in the pathway amino-acid biosynthesis; L-histidine biosynthesis; L-histidine from 5-phospho-alpha-D-ribose 1-diphosphate: step 7/9. The sequence is that of Histidinol-phosphate aminotransferase from Methanoculleus marisnigri (strain ATCC 35101 / DSM 1498 / JR1).